An 86-amino-acid chain; its full sequence is MKTLLLSLVVLTIACLDLGYTKTCFNDDLTNPKTTELCRHSMYFCFKNSWIAGGVERIERGCSLTCPDIKYNGKYIYCCTRDNCNA.

A signal peptide spans 1-21 (MKTLLLSLVVLTIACLDLGYT). Disulfide bonds link Cys-24/Cys-45, Cys-38/Cys-62, Cys-66/Cys-78, and Cys-79/Cys-84.

As to expression, expressed by the venom gland.

Its subcellular location is the secreted. The chain is Short neurotoxin homolog NTL1 from Bungarus multicinctus (Many-banded krait).